A 153-amino-acid polypeptide reads, in one-letter code: MGEKLICNNKKAFHDYFIEERFEAGMVLKGTEVKSLRMGKANLNDSFALVRDGEIFLHNLHINPYDFGNRQNHDPDRLRKLLMHKSEIEKLFGKIREKGYSVVPLRLYFKNGLAKVELGLAKGKKLYDKREDMKKKDQSREMAQALRERSKSH.

The tract at residues 129 to 153 (KREDMKKKDQSREMAQALRERSKSH) is disordered.

The protein belongs to the SmpB family.

It is found in the cytoplasm. In terms of biological role, required for rescue of stalled ribosomes mediated by trans-translation. Binds to transfer-messenger RNA (tmRNA), required for stable association of tmRNA with ribosomes. tmRNA and SmpB together mimic tRNA shape, replacing the anticodon stem-loop with SmpB. tmRNA is encoded by the ssrA gene; the 2 termini fold to resemble tRNA(Ala) and it encodes a 'tag peptide', a short internal open reading frame. During trans-translation Ala-aminoacylated tmRNA acts like a tRNA, entering the A-site of stalled ribosomes, displacing the stalled mRNA. The ribosome then switches to translate the ORF on the tmRNA; the nascent peptide is terminated with the 'tag peptide' encoded by the tmRNA and targeted for degradation. The ribosome is freed to recommence translation, which seems to be the essential function of trans-translation. The chain is SsrA-binding protein from Geobacter metallireducens (strain ATCC 53774 / DSM 7210 / GS-15).